The chain runs to 620 residues: Chaperone protein HscA homolog (620 aa).

This sequence belongs to the heat shock protein 70 family.

Chaperone involved in the maturation of iron-sulfur cluster-containing proteins. Has a low intrinsic ATPase activity which is markedly stimulated by HscB. This is Chaperone protein HscA homolog from Shewanella oneidensis (strain ATCC 700550 / JCM 31522 / CIP 106686 / LMG 19005 / NCIMB 14063 / MR-1).